A 258-amino-acid polypeptide reads, in one-letter code: Spindlin-3 (258 aa).

Positions 1-23 are disordered; that stretch reads MKTPFGKAAAGQRSRTGAGHGSV. 3 tudor-like domain regions span residues 50–99, 129–178, and 210–255; these read VGCR…LELH, VGKA…YQLL, and VGKQ…YDLV. 2 histone H3K4me3 and H3R8me2a binding regions span residues Glu138 and 246–248; that span reads DFH.

This sequence belongs to the SPIN/STSY family. As to quaternary structure, interacts with C11orf84/SPINDOC.

Its function is as follows. Exhibits H3K4me3-binding activity. The protein is Spindlin-3 (SPIN3) of Homo sapiens (Human).